The following is a 285-amino-acid chain: Homeobox protein Hox-A4 (285 aa).

Disordered regions lie at residues P19–A70 and A94–A130. Residues G27 to G41 are compositionally biased toward gly residues. Over residues R44–A70 the composition is skewed to low complexity. Residues G106–P118 are compositionally biased toward pro residues. Positions V159–K164 match the Antp-type hexapeptide motif. Residues P180–H239 constitute a DNA-binding region (homeobox). A disordered region spans residues D238–I285.

This sequence belongs to the Antp homeobox family. Deformed subfamily.

Its subcellular location is the nucleus. In terms of biological role, sequence-specific transcription factor which is part of a developmental regulatory system that provides cells with specific positional identities on the anterior-posterior axis. Binds to sites in the 5'-flanking sequence of its coding region with various affinities. The consensus sequences of the high and low affinity binding sites are 5'-TAATGA[CG]-3' and 5'-CTAATTTT-3'. The sequence is that of Homeobox protein Hox-A4 (Hoxa4) from Mus musculus (Mouse).